A 428-amino-acid chain; its full sequence is MFVDQVKIYVKGGDGGNGMVAFRREKYVPKGGPAGGDGGKGGDVVFKVDEGLSTLMDFRYQRHFKAARGEHGMSKNQHGRNAEDMVVKVPPGTVVIDDDTKQVIADLTEHGQEAVIAKGGRGGRGNTRFATPANPAPQLSENGEPGKERYIVLELKVLADVGLVGFPSVGKSTLLSVVSSAKPKIADYHFTTLNPNLGMVETEDGRSFVMADLPGLIEGAHEGVGLGHQFLRHIERTRVIVHVIDMSGLEGRDPYEDYVTINKELEQYNLRLTERPQIIVANKMDMPDAEENLKAFKEKLTDDYPVFPISAVTRQGLRDLLFEIADRLETTPEFPLYDEEDMAENRVMYKLEDEEAPFEISRDPDGTFVLSGAKLERLFKMTDFSRDESVKRFARQLRGMGVDDALRARGAKDGDTIRLLEFEFEFID.

The Obg domain maps to 1-158 (MFVDQVKIYV…RYIVLELKVL (158 aa)). A disordered region spans residues 118–143 (KGGRGGRGNTRFATPANPAPQLSENG). The OBG-type G domain maps to 159–329 (ADVGLVGFPS…LLFEIADRLE (171 aa)). GTP contacts are provided by residues 165–172 (GFPSVGKS), 190–194 (FTTLN), 212–215 (DLPG), 282–285 (NKMD), and 310–312 (SAV). Ser-172 and Thr-192 together coordinate Mg(2+). The region spanning 350-428 (KLEDEEAPFE…LLEFEFEFID (79 aa)) is the OCT domain.

Belongs to the TRAFAC class OBG-HflX-like GTPase superfamily. OBG GTPase family. Monomer. The cofactor is Mg(2+).

The protein localises to the cytoplasm. Functionally, an essential GTPase which binds GTP, GDP and possibly (p)ppGpp with moderate affinity, with high nucleotide exchange rates and a fairly low GTP hydrolysis rate. Plays a role in control of the cell cycle, stress response, ribosome biogenesis and in those bacteria that undergo differentiation, in morphogenesis control. This Bacillus licheniformis (strain ATCC 14580 / DSM 13 / JCM 2505 / CCUG 7422 / NBRC 12200 / NCIMB 9375 / NCTC 10341 / NRRL NRS-1264 / Gibson 46) protein is GTPase Obg.